Consider the following 245-residue polypeptide: 8-amino-3,8-dideoxy-manno-octulosonate cytidylyltransferase (245 aa).

Belongs to the KdsB family.

The protein localises to the cytoplasm. It carries out the reaction 8-amino-3,8-dideoxy-alpha-D-manno-octulosonate + CTP = CMP-8-amino-3,8-dideoxy-alpha-D-manno-oct-2-ulosonate + diphosphate. Its pathway is bacterial outer membrane biogenesis; lipopolysaccharide biosynthesis. Activates KDO8N (a required 8-carbon sugar) for incorporation into bacterial lipopolysaccharide in the Shewanella genus. This Shewanella amazonensis (strain ATCC BAA-1098 / SB2B) protein is 8-amino-3,8-dideoxy-manno-octulosonate cytidylyltransferase.